A 189-amino-acid polypeptide reads, in one-letter code: Cold-regulated 413 plasma membrane protein 3 (189 aa).

Residues 1–24 (MENIEYLNEIQAVAGKLIHSYGVP) are Extracellular-facing. A helical transmembrane segment spans residues 25 to 45 (VMITLFLRWLASIVAVFLMIL). Over 46–55 (DQTKWKYSNN) the chain is Cytoplasmic. A helical transmembrane segment spans residues 56–76 (IMASLLAPYLFSSLPIVIFQV). Residues 77-79 (LRN) are Extracellular-facing. A helical transmembrane segment spans residues 80 to 100 (GVGKWIALLTVILRLFLPNHF). At 101-104 (HESL) the chain is on the cytoplasmic side. A helical membrane pass occupies residues 105-125 (EIPGATILLIVVTPSDIGAIF). The Extracellular portion of the chain corresponds to 126-168 (RDDLRYTGGDVCLLTSFYLINKHTKACGGIKNSFTQKDKVTYS). Residues 169 to 189 (ICLWILFVYPILSSFAALFYL) form a helical membrane-spanning segment.

The protein belongs to the Cold-regulated 413 protein family.

Its subcellular location is the cell membrane. In Arabidopsis thaliana (Mouse-ear cress), this protein is Cold-regulated 413 plasma membrane protein 3.